The sequence spans 581 residues: MDSLQDTVPLDHGGCCPALSRLVPRGFGTEMWTLFALSGPLFLFQVLTFMIYIVSTVFCGHLGKVELASVTLAVAFVNVCGVSVGVGLSSACDTLMSQSFGSPNKKHVGVILQRGALVLLLCCLPCWALFLNTQHILLLFRQDPEVSRLTQDYVMIFIPGLPVIFLYNLLAKYLQNQKITWPQVLSGVVGNCVNGVANYALVSVLNLGVRGSAYANIISQFAQTVFLLLYIVLKKLHLETWAGWSSQCLQDWGPFFSLAVPSMLMICVEWWAYEIGSFLMGLLSVVDLSAQAVIYEVATVTYMRHSHHLAYTAHVARIPLGLSIGVCVRVGMALGAADTVQAKRSAVSGVLSIVGISLVLGTLISILKNQLGHIFTNDEDVIALVSQVLPVYSVFHVFEAICCVYGGVLRGTGKQAFGAAVNAITYYIIGLPLGILLTFVVRMRIMGLWLGMLACVFLATAAFVAYTARLDWKLAAEEAKKHSGQQQQQQRAESTATRSGPEKAVLSSVATGSSPGITLTTYSRSECHVDLFRTPEEAHTLSAPTSRLSVKQLVIRRGAALGAASATLMVGLTVRILATRH.

Topologically, residues 1–33 (MDSLQDTVPLDHGGCCPALSRLVPRGFGTEMWT) are cytoplasmic. The helical transmembrane segment at 34–54 (LFALSGPLFLFQVLTFMIYIV) threads the bilayer. At 55–66 (STVFCGHLGKVE) the chain is on the extracellular side. A helical membrane pass occupies residues 67-87 (LASVTLAVAFVNVCGVSVGVG). Residues 88 to 119 (LSSACDTLMSQSFGSPNKKHVGVILQRGALVL) lie on the Cytoplasmic side of the membrane. Residues 120-140 (LLCCLPCWALFLNTQHILLLF) traverse the membrane as a helical segment. Residues 141-153 (RQDPEVSRLTQDY) lie on the Extracellular side of the membrane. Residues 154 to 174 (VMIFIPGLPVIFLYNLLAKYL) form a helical membrane-spanning segment. Over 175–183 (QNQKITWPQ) the chain is Cytoplasmic. A helical transmembrane segment spans residues 184–204 (VLSGVVGNCVNGVANYALVSV). Over 205–212 (LNLGVRGS) the chain is Extracellular. A helical transmembrane segment spans residues 213 to 233 (AYANIISQFAQTVFLLLYIVL). Residues 234–253 (KKLHLETWAGWSSQCLQDWG) lie on the Cytoplasmic side of the membrane. The helical transmembrane segment at 254–273 (PFFSLAVPSMLMICVEWWAY) threads the bilayer. Residues 274 to 317 (EIGSFLMGLLSVVDLSAQAVIYEVATVTYMRHSHHLAYTAHVAR) are Extracellular-facing. The chain crosses the membrane as a helical span at residues 318-338 (IPLGLSIGVCVRVGMALGAAD). Topologically, residues 339–346 (TVQAKRSA) are cytoplasmic. Residues 347–367 (VSGVLSIVGISLVLGTLISIL) form a helical membrane-spanning segment. Topologically, residues 368–380 (KNQLGHIFTNDED) are extracellular. Residues 381 to 401 (VIALVSQVLPVYSVFHVFEAI) traverse the membrane as a helical segment. Residues 402-420 (CCVYGGVLRGTGKQAFGAA) are Cytoplasmic-facing. A helical membrane pass occupies residues 421 to 441 (VNAITYYIIGLPLGILLTFVV). The Extracellular portion of the chain corresponds to 442 to 444 (RMR). The chain crosses the membrane as a helical span at residues 445-465 (IMGLWLGMLACVFLATAAFVA). At 466 to 557 (YTARLDWKLA…LSVKQLVIRR (92 aa)) the chain is on the cytoplasmic side. A disordered region spans residues 481–513 (KHSGQQQQQQRAESTATRSGPEKAVLSSVATGS). Residues 558-578 (GAALGAASATLMVGLTVRILA) traverse the membrane as a helical segment. The Extracellular segment spans residues 579 to 581 (TRH).

The protein belongs to the multi antimicrobial extrusion (MATE) (TC 2.A.66.1) family.

The protein resides in the cell membrane. Its subcellular location is the apical cell membrane. The enzyme catalyses thiamine(out) + H(+)(in) = thiamine(in) + H(+)(out). The catalysed reaction is estrone 3-sulfate(in) + H(+)(out) = estrone 3-sulfate(out) + H(+)(in). It carries out the reaction creatinine(in) + H(+)(out) = creatinine(out) + H(+)(in). Multidrug efflux pump that functions as a H(+)/organic cation antiporter. Mediates the efflux of cationic compounds, such as the model cations, tetraethylammonium (TEA) and 1-methyl-4-phenylpyridinium (MPP+), the platinum-based drug oxaliplatin or weak bases that are positively charged at physiological pH, cimetidine or the antidiabetic drug metformin. Mediates the efflux of the endogenous compounds creatinine, thiamine and estrone-3-sulfate. Plays a physiological role in the excretion of drugs, toxins and endogenous metabolites through the kidney. This Pongo abelii (Sumatran orangutan) protein is Multidrug and toxin extrusion protein 2 (SLC47A2).